The primary structure comprises 289 residues: GTPase Era (289 aa).

Positions 2–167 (KSGFVSIIGR…LDEICKLLPE (166 aa)) constitute an Era-type G domain. Residues 10 to 17 (GRTNAGKS) are G1. GTP is bound at residue 10-17 (GRTNAGKS). The G2 stretch occupies residues 36–40 (NATRR). Residues 57–60 (DTPG) form a G3 region. Residues 57–61 (DTPGL) and 116–119 (TKVD) contribute to the GTP site. The tract at residues 116 to 119 (TKVD) is G4. The interval 146–148 (FST) is G5. A KH type-2 domain is found at 194-274 (IYENLSDEIP…FLKLDVVVKK (81 aa)).

This sequence belongs to the TRAFAC class TrmE-Era-EngA-EngB-Septin-like GTPase superfamily. Era GTPase family. Monomer.

It is found in the cytoplasm. It localises to the cell inner membrane. Functionally, an essential GTPase that binds both GDP and GTP, with rapid nucleotide exchange. Plays a role in 16S rRNA processing and 30S ribosomal subunit biogenesis and possibly also in cell cycle regulation and energy metabolism. This chain is GTPase Era, found in Campylobacter concisus (strain 13826).